The following is a 202-amino-acid chain: GTP cyclohydrolase-2 (202 aa).

49-53 (RIHSE) is a binding site for GTP. Cys54, Cys65, and Cys67 together coordinate Zn(2+). GTP-binding positions include Gln70, 92-94 (EGR), and Thr114. Asp126 (proton acceptor) is an active-site residue. Arg128 (nucleophile) is an active-site residue. Thr149 and Lys154 together coordinate GTP.

This sequence belongs to the GTP cyclohydrolase II family. Requires Zn(2+) as cofactor.

The enzyme catalyses GTP + 4 H2O = 2,5-diamino-6-hydroxy-4-(5-phosphoribosylamino)-pyrimidine + formate + 2 phosphate + 3 H(+). It participates in cofactor biosynthesis; riboflavin biosynthesis; 5-amino-6-(D-ribitylamino)uracil from GTP: step 1/4. Its function is as follows. Catalyzes the conversion of GTP to 2,5-diamino-6-ribosylamino-4(3H)-pyrimidinone 5'-phosphate (DARP), formate and pyrophosphate. The chain is GTP cyclohydrolase-2 from Shewanella frigidimarina (strain NCIMB 400).